We begin with the raw amino-acid sequence, 571 residues long: Optineurin (571 aa).

Disordered regions lie at residues 1 to 32 (MSHQ…HPNL) and 100 to 144 (LSHE…DQLR). The stretch at 38–170 (EELLQQMKEL…VSELQLKLNS (133 aa)) forms a coiled coil. An interaction with Rab8 region spans residues 58–209 (MKLNNQAMKG…GPTRTVSIGT (152 aa)). 2 stretches are compositionally biased toward basic and acidic residues: residues 100 to 123 (LSHE…RSSE) and 130 to 143 (RLPR…KDQL). The LIR signature appears at 176–181 (DSFVEI). At Ser177 the chain carries Phosphoserine; by TBK1. A compositionally biased stretch (basic and acidic residues) spans 186–197 (GEAEGSVKEIKH). 2 disordered regions span residues 186–210 (GEAE…IGTS) and 255–291 (VSDF…TVGS). Ser198 carries the phosphoserine modification. Over residues 201–210 (PTRTVSIGTS) the composition is skewed to polar residues. Positions 233–502 (CLREGNQKVE…LLKENDAFED (270 aa)) form a coiled coil. Basic and acidic residues-rich tracts occupy residues 255 to 268 (VSDF…RSEI) and 275 to 286 (STEKENEEEKGP). At Ser336 the chain carries Phosphoserine. An interaction with HD region spans residues 405-571 (TRKESEKVDR…LQIHVMDCII (167 aa)). The interaction with MYO6 stretch occupies residues 406-514 (RKESEKVDRA…RQSLMEMQSR (109 aa)). Residues 468-473 (DFHAER) carry the UBAN motif. Ser520 bears the Phosphoserine mark. A CCHC NOA-type zinc finger spans residues 541-571 (QRNIPIHSCPKCGEVLPDIDTLQIHVMDCII). Zn(2+) contacts are provided by Cys549, Cys552, His565, and Cys569.

As to quaternary structure, self-associates. Interacts with HD. Interacts with GTF3A. Interacts with MYO6. Interacts (via UBAN) with ubiquitinated TFRC. Interacts with GTP-bound Rab8 (RAB8A and/or RAB8B). Interacts with TBC1D17. Interacts with TBK1. Interacts with TRAF3. Binds to linear ubiquitin chains. Interacts with LC3 family members MAP1LC3A, MAP1LC3B, GABARAP, GABARAPL1 and GABARAPL2; OPTN phosphorylation increases the association (at least with MAP1LC3B). Interacts with RAB12; the interaction may be indirect. Interacts with TBK1; this interaction leads to the Golgi localization of TBK1 and its subsequent activation. Interacts with palmitoyltransferase ZDHHC17/HIP14; the interaction does not lead to palmitoylation of OPTN. Interacts with CYLD. Interacts with TOM1; the interaction is indirect and is mediated by MYO6, which acts as a bridge between TOM1 and OPTN. Interacts with USP12; the interaction is independent of USP12 deubiquitinase activity and may be involved in regulation of autophagic flux. In terms of processing, phosphorylated by TBK1, leading to restrict bacterial proliferation in case of infection.

The protein localises to the cytoplasm. Its subcellular location is the perinuclear region. The protein resides in the golgi apparatus. It is found in the trans-Golgi network. It localises to the cytoplasmic vesicle. The protein localises to the autophagosome. Its subcellular location is the recycling endosome. In terms of biological role, plays an important role in the maintenance of the Golgi complex, in membrane trafficking, in exocytosis, through its interaction with myosin VI and Rab8. Links myosin VI to the Golgi complex and plays an important role in Golgi ribbon formation. Negatively regulates the induction of IFNB in response to RNA virus infection. Plays a neuroprotective role in the eye and optic nerve. Probably part of the TNF-alpha signaling pathway that can shift the equilibrium toward induction of cell death. May act by regulating membrane trafficking and cellular morphogenesis via a complex that contains Rab8 and huntingtin (HD). Mediates the interaction of Rab8 with the probable GTPase-activating protein TBC1D17 during Rab8-mediated endocytic trafficking, such as that of transferrin receptor (TFRC/TfR); regulates Rab8 recruitment to tubules emanating from the endocytic recycling compartment. Autophagy receptor that interacts directly with both the cargo to become degraded and an autophagy modifier of the MAP1 LC3 family; targets ubiquitin-coated bacteria (xenophagy) and appears to function in the same pathway as SQSTM1 and CALCOCO2/NDP52. This is Optineurin (OPTN) from Macaca fascicularis (Crab-eating macaque).